We begin with the raw amino-acid sequence, 374 residues long: Putative F-box protein At3g16590 (374 aa).

An F-box domain is found at 1 to 45; that stretch reads MPTKLPLELEDEILLRVPPLSLTRFRTVCKRWNTLFNDQRFINNH.

The polypeptide is Putative F-box protein At3g16590 (Arabidopsis thaliana (Mouse-ear cress)).